Here is a 192-residue protein sequence, read N- to C-terminus: Xanthine phosphoribosyltransferase (192 aa).

Positions 20 and 27 each coordinate xanthine. 128-132 (ANGDA) lines the 5-phospho-alpha-D-ribose 1-diphosphate pocket. Residue K156 participates in xanthine binding.

It belongs to the purine/pyrimidine phosphoribosyltransferase family. Xpt subfamily. In terms of assembly, homodimer.

Its subcellular location is the cytoplasm. It carries out the reaction XMP + diphosphate = xanthine + 5-phospho-alpha-D-ribose 1-diphosphate. It functions in the pathway purine metabolism; XMP biosynthesis via salvage pathway; XMP from xanthine: step 1/1. In terms of biological role, converts the preformed base xanthine, a product of nucleic acid breakdown, to xanthosine 5'-monophosphate (XMP), so it can be reused for RNA or DNA synthesis. The sequence is that of Xanthine phosphoribosyltransferase from Staphylococcus epidermidis (strain ATCC 35984 / DSM 28319 / BCRC 17069 / CCUG 31568 / BM 3577 / RP62A).